The sequence spans 322 residues: MKIDVIPLGTASAVPTDERHLSALAVERKGQVLLFDCGEGTQYRLREAGLSWARIEAIFVTHLHGDHCYGLPGLLSTMELQQRADPVTLVLPPGGPAMLRAVPGATPARLSFPVHVVEADAAGTLGTVYETDEIAVEARRLDHREVFAMGFRVAERTRPGRFDPERARALGVPEGPAFGRLQNGCPVTTPDGTTVRPGQVLGPPRPGVVAAYVTDTRPCAGGRALAEEADLLYHDATFADDHAARADETGHSTARQAATVAREAGATRLLLGHLSARYPDPAPQEREARSVFPAAEVAEELRRYELDPREKEPDPVGPADES.

Residues His-62, His-64, Asp-66, His-67, His-143, Asp-215, and His-273 each coordinate Zn(2+). The active-site Proton acceptor is the Asp-66. Positions 300–314 are enriched in basic and acidic residues; sequence ELRRYELDPREKEPD. The tract at residues 300–322 is disordered; that stretch reads ELRRYELDPREKEPDPVGPADES.

It belongs to the RNase Z family. As to quaternary structure, homodimer. Requires Zn(2+) as cofactor.

The catalysed reaction is Endonucleolytic cleavage of RNA, removing extra 3' nucleotides from tRNA precursor, generating 3' termini of tRNAs. A 3'-hydroxy group is left at the tRNA terminus and a 5'-phosphoryl group is left at the trailer molecule.. Its function is as follows. Zinc phosphodiesterase, which displays some tRNA 3'-processing endonuclease activity. Probably involved in tRNA maturation, by removing a 3'-trailer from precursor tRNA. The protein is Ribonuclease Z of Salinibacter ruber (strain DSM 13855 / M31).